A 216-amino-acid polypeptide reads, in one-letter code: Protein shisa-5 (216 aa).

The first 26 residues, 1–26 (MAAPAPAPRILVLLLLLLPAPEGAQS), serve as a signal peptide directing secretion. Topologically, residues 27 to 93 (ELCMISHGRK…SGFDSDPVAR (67 aa)) are extracellular. A helical membrane pass occupies residues 94-114 (FGTVIAIGVTLFVIAVVTVIV). Residues 115–216 (CCTCSCCCLY…AYMEPPKAVP (102 aa)) lie on the Cytoplasmic side of the membrane.

It belongs to the shisa family. Interacts with PDCD6; PDCD6 can stabilize SHISA5.

The protein localises to the endoplasmic reticulum membrane. The protein resides in the nucleus membrane. Functionally, can induce apoptosis in a caspase-dependent manner and plays a role in p53/TP53-dependent apoptosis. This is Protein shisa-5 (SHISA5) from Bos taurus (Bovine).